A 286-amino-acid chain; its full sequence is D-tagatose-1,6-bisphosphate aldolase subunit KbaY (286 aa).

Asp-82 (proton donor) is an active-site residue. Positions 83 and 180 each coordinate Zn(2+). Gly-181 provides a ligand contact to dihydroxyacetone phosphate. His-208 serves as a coordination point for Zn(2+). Dihydroxyacetone phosphate contacts are provided by residues 209–211 and 230–233; these read GAS and NVAT.

Belongs to the class II fructose-bisphosphate aldolase family. TagBP aldolase KbaY subfamily. In terms of assembly, homotetramer. Forms a complex with KbaZ. The cofactor is Zn(2+).

The enzyme catalyses D-tagatofuranose 1,6-bisphosphate = D-glyceraldehyde 3-phosphate + dihydroxyacetone phosphate. It functions in the pathway carbohydrate metabolism; D-tagatose 6-phosphate degradation; D-glyceraldehyde 3-phosphate and glycerone phosphate from D-tagatose 6-phosphate: step 2/2. Functionally, catalytic subunit of the tagatose-1,6-bisphosphate aldolase KbaYZ, which catalyzes the reversible aldol condensation of dihydroxyacetone phosphate (DHAP or glycerone-phosphate) with glyceraldehyde 3-phosphate (G3P) to produce tagatose 1,6-bisphosphate (TBP). Requires KbaZ subunit for full activity and stability. In Escherichia coli O127:H6 (strain E2348/69 / EPEC), this protein is D-tagatose-1,6-bisphosphate aldolase subunit KbaY.